A 142-amino-acid chain; its full sequence is Large ribosomal subunit protein uL13 (142 aa).

The protein belongs to the universal ribosomal protein uL13 family. Part of the 50S ribosomal subunit.

In terms of biological role, this protein is one of the early assembly proteins of the 50S ribosomal subunit, although it is not seen to bind rRNA by itself. It is important during the early stages of 50S assembly. The sequence is that of Large ribosomal subunit protein uL13 from Citrobacter koseri (strain ATCC BAA-895 / CDC 4225-83 / SGSC4696).